Consider the following 203-residue polypeptide: Small ribosomal subunit protein uS4 (203 aa).

Positions 93 to 156 (RRLDNVVYRL…LKVPAILEAV (64 aa)) constitute an S4 RNA-binding domain.

The protein belongs to the universal ribosomal protein uS4 family. In terms of assembly, part of the 30S ribosomal subunit. Contacts protein S5. The interaction surface between S4 and S5 is involved in control of translational fidelity.

One of the primary rRNA binding proteins, it binds directly to 16S rRNA where it nucleates assembly of the body of the 30S subunit. In terms of biological role, with S5 and S12 plays an important role in translational accuracy. The polypeptide is Small ribosomal subunit protein uS4 (Streptococcus sanguinis (strain SK36)).